A 642-amino-acid polypeptide reads, in one-letter code: Putative ATP-binding protein YdiF (642 aa).

2 ABC transporter domains span residues 4–259 and 327–541; these read LQVN…EKDL and LRVQ…ELEK. ATP is bound by residues 36–43 and 360–367; these read GRNGAGKS and GPNGIGKS. 2 stretches are compositionally biased toward basic and acidic residues: residues 541 to 550 and 557 to 567; these read KMNQQEETDK and SDSKRSYEEEK. The interval 541 to 567 is disordered; the sequence is KMNQQEETDKTPATVKSDSKRSYEEEK.

This sequence belongs to the ABC transporter superfamily. ABCF family. YdiF subfamily.

The polypeptide is Putative ATP-binding protein YdiF (ydiF) (Bacillus subtilis (strain 168)).